An 84-amino-acid chain; its full sequence is U-actitoxin-Avd8e (84 aa).

A signal peptide spans 1–22 (MASARTLVLLLIGAVLMCQVSA). A propeptide spanning residues 23-41 (DSELLNEILAAHMEEDMPE) is cleaved from the precursor. Residues 44-84 (CIDRYRSNICGSVIRPLDCTRRKSRMGRFARTNCKKLCGFC) form the ShKT domain. Intrachain disulfides connect Cys-44–Cys-84, Cys-53–Cys-77, and Cys-62–Cys-81.

It belongs to the sea anemone 8 toxin family.

It is found in the secreted. The protein resides in the nematocyst. This Anemonia viridis (Snakelocks anemone) protein is U-actitoxin-Avd8e.